The chain runs to 95 residues: Opiscorpine-3 (95 aa).

An N-terminal signal peptide occupies residues M1–C19. A BetaSPN-type CS-alpha/beta domain is found at E55–Y95. 3 disulfides stabilise this stretch: C58–C82, C68–C87, and C72–C89.

Belongs to the long chain scorpion toxin family. Class 3 subfamily. As to expression, expressed by the venom gland.

The protein resides in the secreted. Its function is as follows. Has antimicrobial activity against yeasts and bacteria. The protein is Opiscorpine-3 of Opistophthalmus carinatus (African yellow leg scorpion).